The following is a 354-amino-acid chain: cAMP-dependent protein kinase catalytic subunit 2 (354 aa).

The Protein kinase domain maps to 45–301 (YITRAVLGNG…SSDVKSHPWF (257 aa)). ATP-binding positions include 51 to 59 (LGNGSFGTV) and Lys74. Asp168 functions as the Proton acceptor in the catalytic mechanism. In terms of domain architecture, AGC-kinase C-terminal spans 302–354 (QGVDWFGILNQEVTAPYQPTISGAEDLSNFENFEFKDRYKSRINRHPELFANF).

Belongs to the protein kinase superfamily. AGC Ser/Thr protein kinase family. cAMP subfamily. More abundant in adult body than adult head.

It catalyses the reaction L-seryl-[protein] + ATP = O-phospho-L-seryl-[protein] + ADP + H(+). The enzyme catalyses L-threonyl-[protein] + ATP = O-phospho-L-threonyl-[protein] + ADP + H(+). This Drosophila melanogaster (Fruit fly) protein is cAMP-dependent protein kinase catalytic subunit 2 (Pka-C2).